The chain runs to 341 residues: UDP-N-acetylenolpyruvoylglucosamine reductase (341 aa).

The FAD-binding PCMH-type domain occupies 15-185 (VTQSCLSLIE…TAVGLRLPKT (171 aa)). Arg-161 is an active-site residue. Ser-231 functions as the Proton donor in the catalytic mechanism. Glu-327 is an active-site residue.

Belongs to the MurB family. FAD is required as a cofactor.

The protein resides in the cytoplasm. The enzyme catalyses UDP-N-acetyl-alpha-D-muramate + NADP(+) = UDP-N-acetyl-3-O-(1-carboxyvinyl)-alpha-D-glucosamine + NADPH + H(+). It participates in cell wall biogenesis; peptidoglycan biosynthesis. Cell wall formation. The polypeptide is UDP-N-acetylenolpyruvoylglucosamine reductase (Shewanella oneidensis (strain ATCC 700550 / JCM 31522 / CIP 106686 / LMG 19005 / NCIMB 14063 / MR-1)).